We begin with the raw amino-acid sequence, 518 residues long: Probable cytochrome P450 9h1 (518 aa).

Cys462 lines the heme pocket.

The protein belongs to the cytochrome P450 family. Heme serves as cofactor.

It is found in the endoplasmic reticulum membrane. The protein resides in the microsome membrane. In terms of biological role, may be involved in the metabolism of insect hormones and in the breakdown of synthetic insecticides. This is Probable cytochrome P450 9h1 (Cyp9h1) from Drosophila melanogaster (Fruit fly).